We begin with the raw amino-acid sequence, 674 residues long: E3 ubiquitin ligase Rnf157 (674 aa).

Residues 277–316 (CVVCLSDVRDTLILPCRHLCLCNACADTLRYQASNCPICR) form an RING-type zinc finger. 2 disordered regions span residues 376–404 (LTPS…GSDI) and 433–610 (QNSS…TGRE). Polar residues predominate over residues 469-508 (TPESENLTLSSSGAIDQSSCTGTPLSPTISSPEDPLSSSL). Low complexity predominate over residues 509–526 (AQSIMSMASSHSQQSQLS). Residues 527–537 (TDTVSSMSGSY) show a composition bias toward polar residues. Acidic residues predominate over residues 583–604 (EEMDAEGNVTEEEFASPEEDDG).

It is found in the cytoplasm. The catalysed reaction is S-ubiquitinyl-[E2 ubiquitin-conjugating enzyme]-L-cysteine + [acceptor protein]-L-lysine = [E2 ubiquitin-conjugating enzyme]-L-cysteine + N(6)-ubiquitinyl-[acceptor protein]-L-lysine.. Its function is as follows. E3 ubiquitin ligase that ubiquitinates apbb1 for its degradation by the proteasome and thus prevents apoptosis and promotes survival of neurons. Has a dual role in neurons as it is also required for dendrite growth and maintenance for which its ligase activity is not critical. May act as a scaffold molecule to regulate this process. Acts as a downstream effector of the interconnected PI3K and MAPK signaling pathways and thus participates in the regulation of the cell cycle. The protein is E3 ubiquitin ligase Rnf157 (rnf157) of Xenopus laevis (African clawed frog).